A 930-amino-acid polypeptide reads, in one-letter code: Isoleucine--tRNA ligase (930 aa).

Residues 57–67 (PYANGNIHVGH) carry the 'HIGH' region motif. Position 554 (Glu-554) interacts with L-isoleucyl-5'-AMP. A 'KMSKS' region motif is present at residues 595–599 (KMSKS). Lys-598 contributes to the ATP binding site. Zn(2+) is bound by residues Cys-888, Cys-891, Cys-908, and Cys-911.

Belongs to the class-I aminoacyl-tRNA synthetase family. IleS type 1 subfamily. Monomer. The cofactor is Zn(2+).

It is found in the cytoplasm. It carries out the reaction tRNA(Ile) + L-isoleucine + ATP = L-isoleucyl-tRNA(Ile) + AMP + diphosphate. Functionally, catalyzes the attachment of isoleucine to tRNA(Ile). As IleRS can inadvertently accommodate and process structurally similar amino acids such as valine, to avoid such errors it has two additional distinct tRNA(Ile)-dependent editing activities. One activity is designated as 'pretransfer' editing and involves the hydrolysis of activated Val-AMP. The other activity is designated 'posttransfer' editing and involves deacylation of mischarged Val-tRNA(Ile). The polypeptide is Isoleucine--tRNA ligase (Streptococcus pneumoniae (strain Hungary19A-6)).